The chain runs to 734 residues: Photosystem I P700 chlorophyll a apoprotein A2 (734 aa).

8 helical membrane-spanning segments follow: residues 46-69 (IFASHFGQLAIIFLWTSGNLFHVA), 135-158 (LYTGALFLLFLSAISLIAGWLHLQ), 175-199 (LNHHLSGLFGVSSLAWTGHLVHVAI), 273-291 (MAHHHLAIAFIFLVAGHMY), 330-353 (LHFQLGLALASLGVITSLVAQHMY), 369-395 (AALYTHHQYIAGFIMTGAFAHGAIFFI), 417-439 (AIISHLSWASLFLGFHTLGLYVH), and 517-535 (FLVHHAIALGLHTTTLILV). The [4Fe-4S] cluster site is built by cysteine 559 and cysteine 568. 2 helical membrane-spanning segments follow: residues 575–596 (AFYLAVFWMLNTIGWVTFYWHW) and 643–665 (LSVWAWMFLFGHLVWATGFMFLI). Positions 654, 662, and 670 each coordinate chlorophyll a. A phylloquinone-binding site is contributed by tryptophan 671. Residues 707–727 (LVGLAHFSVGYIFTYAAFLIA) form a helical membrane-spanning segment.

The protein belongs to the PsaA/PsaB family. As to quaternary structure, the PsaA/B heterodimer binds the P700 chlorophyll special pair and subsequent electron acceptors. PSI consists of a core antenna complex that captures photons, and an electron transfer chain that converts photonic excitation into a charge separation. The eukaryotic PSI reaction center is composed of at least 11 subunits. The cofactor is P700 is a chlorophyll a/chlorophyll a' dimer, A0 is one or more chlorophyll a, A1 is one or both phylloquinones and FX is a shared 4Fe-4S iron-sulfur center..

It is found in the plastid. The protein localises to the chloroplast thylakoid membrane. It catalyses the reaction reduced [plastocyanin] + hnu + oxidized [2Fe-2S]-[ferredoxin] = oxidized [plastocyanin] + reduced [2Fe-2S]-[ferredoxin]. PsaA and PsaB bind P700, the primary electron donor of photosystem I (PSI), as well as the electron acceptors A0, A1 and FX. PSI is a plastocyanin-ferredoxin oxidoreductase, converting photonic excitation into a charge separation, which transfers an electron from the donor P700 chlorophyll pair to the spectroscopically characterized acceptors A0, A1, FX, FA and FB in turn. Oxidized P700 is reduced on the lumenal side of the thylakoid membrane by plastocyanin. This is Photosystem I P700 chlorophyll a apoprotein A2 from Daucus carota (Wild carrot).